Here is a 145-residue protein sequence, read N- to C-terminus: Halilectin 3, alpha chain (145 aa).

Asn73 is a glycosylation site (N-linked (GlcNAc...) asparagine).

As to quaternary structure, probable heterotrimer consisting of an alpha chain and two beta chains. The alpha chain can probably have different glycosylation states. Post-translationally, glycosylated.

Its function is as follows. Lectin with affinity for N-acetyl-galactosamine, carragenan and glycoprotein porcine stomach mucin (PSM). Has metal-independent hemagglutinating activity towards erythrocytes from rabbit and human. Hemagglutinating activity is not inhibited by D-galactose, D-glucose, D-mannose, D-fucose, methyl-alpha-D-galactopyranoside, methyl-alpha-D-glucopyranoside, N-acetyl-glucosamine, N-acetyl-mannosamine, D-fructose, alpha-D-lactose, beta-D-lactose, D-lactulose, D-sucrose, fucoidan or glycoproteins thyroglobulin and ovalmucoid. The sequence is that of Halilectin 3, alpha chain from Haliclona caerulea (Blue Caribbean sponge).